A 124-amino-acid polypeptide reads, in one-letter code: Small ribosomal subunit protein bS6 (124 aa).

This sequence belongs to the bacterial ribosomal protein bS6 family.

In terms of biological role, binds together with bS18 to 16S ribosomal RNA. The chain is Small ribosomal subunit protein bS6 from Chromobacterium violaceum (strain ATCC 12472 / DSM 30191 / JCM 1249 / CCUG 213 / NBRC 12614 / NCIMB 9131 / NCTC 9757 / MK).